A 205-amino-acid chain; its full sequence is Enhancer of split mgamma protein (205 aa).

Residues 15-72 (YRKVMKPMLERKRRARINKCLDELKDLMVATLESEGEHVTRLEKADILELTVTHLQKM) enclose the bHLH domain. An Orange domain is found at 93-126 (FRSGYIHAVNEVSRSLSQLPGMNVSLGTQLMTHL). The short motif at 202–205 (WRPW) is the WRPW motif element.

Homodimer. Heterodimer with dpn. Might form higher-order oligomers. Transcription repression requires formation of a complex with a corepressor protein (Groucho). As to expression, expressed in sensory organ precursors in the wing, leg and eye imaginal disk.

It localises to the nucleus. Transcriptional repressor of genes that require a bHLH protein for their transcription. May serve as a transcriptional regulator of the Achaete-scute complex (AS-C) genes. Contributes to the neural-epidermal lineage decision during early neurogenesis. Part of the Notch signaling pathway, plays a role in neuroblasts proliferation in embryos and larvae. In the larval brain, together with other self-renewal transcriptional repressors such as klu and dpn, required for type II neuroblast self-renewal and for maintaining erm in an inactive state in intermediate neural progenitors (INP) derived from type II neuroblasts. The protein is Enhancer of split mgamma protein of Drosophila melanogaster (Fruit fly).